The sequence spans 155 residues: Small ribosomal subunit protein uS7cz/uS7cy (155 aa).

It belongs to the universal ribosomal protein uS7 family. As to quaternary structure, part of the 30S ribosomal subunit.

It localises to the plastid. Functionally, one of the primary rRNA binding proteins, it binds directly to 16S rRNA where it nucleates assembly of the head domain of the 30S subunit. The chain is Small ribosomal subunit protein uS7cz/uS7cy (rps7-A) from Cuscuta obtusiflora (Peruvian dodder).